The chain runs to 635 residues: Threonine--tRNA ligase (635 aa).

Residues 1–61 enclose the TGS domain; sequence MIKITLKDGS…ENDCTLNLLT (61 aa). A catalytic region spans residues 242–532; it reads DHRKLGRELD…LTEHYAGAFP (291 aa). Zn(2+) contacts are provided by cysteine 333, histidine 384, and histidine 509.

This sequence belongs to the class-II aminoacyl-tRNA synthetase family. Homodimer. Requires Zn(2+) as cofactor.

Its subcellular location is the cytoplasm. It catalyses the reaction tRNA(Thr) + L-threonine + ATP = L-threonyl-tRNA(Thr) + AMP + diphosphate + H(+). Its function is as follows. Catalyzes the attachment of threonine to tRNA(Thr) in a two-step reaction: L-threonine is first activated by ATP to form Thr-AMP and then transferred to the acceptor end of tRNA(Thr). Also edits incorrectly charged L-seryl-tRNA(Thr). This is Threonine--tRNA ligase from Acetivibrio thermocellus (strain ATCC 27405 / DSM 1237 / JCM 9322 / NBRC 103400 / NCIMB 10682 / NRRL B-4536 / VPI 7372) (Clostridium thermocellum).